A 427-amino-acid chain; its full sequence is Chitin disaccharide deacetylase (427 aa).

The signal sequence occupies residues 1 to 22; that stretch reads MKLNKLAIATLVSAALSQYAFA. The NodB homology domain occupies 28-326; the sequence is GTIYLTFDDG…LAKQAGYVFD (299 aa). Chitin-binding type-3 domains lie at 333–375 and 382–419; these read PNWQ…SSLW and TNWT…TPNS.

It belongs to the polysaccharide deacetylase family. Carbohydrate-binding module 12 subfamily.

It carries out the reaction N,N'-diacetylchitobiose + H2O = N-acetyl-beta-D-glucosaminyl-(1-&gt;4)-D-glucosamine + acetate. It functions in the pathway glycan degradation; chitin degradation. Functionally, specifically catalyzes the degradation of N,N'-diacetylchitobiose. Key enzyme in the chitin catabolic cascade. The polypeptide is Chitin disaccharide deacetylase (deaA) (Vibrio alginolyticus).